The sequence spans 1278 residues: Dynactin subunit 1 (1278 aa).

The disordered stretch occupies residues 1-25 (MAQSKRHVYSRTPSGSRMSAEASAR). One can recognise a CAP-Gly domain in the interval 48-90 (GATLFATGKWVGVILDEAKGKNDGTVQGRKYFTCDEGHGIFVR). The tract at residues 100-223 (GADTTSPETP…SKEEEGLRAQ (124 aa)) is disordered. The segment covering 102–114 (DTTSPETPDSSAS) has biased composition (polar residues). Threonine 108 bears the Phosphothreonine mark. Over residues 129–152 (SKLRGLKPKKAPTARKTTTRRPKP) the composition is skewed to basic residues. Phosphothreonine; by SLK occurs at positions 145, 146, and 147. Residues 161–184 (AGASSSLGPSGSASAGELSSSEPS) are compositionally biased toward low complexity. The residue at position 179 (serine 179) is a Phosphoserine; by PLK1. Serine 212 is modified (phosphoserine; by CDK1). Coiled-coil stretches lie at residues 213–547 (PSKE…RQQQ), 943–1049 (LKLE…EGLR), and 1182–1211 (SAQL…KETV). A compositionally biased stretch (basic and acidic residues) spans 214–223 (SKEEEGLRAQ). An interaction with HPS6 region spans residues 911 to 1278 (EYDAERPPSK…LHQLHSRLIS (368 aa)).

It belongs to the dynactin 150 kDa subunit family. As to quaternary structure, monomer and homodimer. Subunit of dynactin, a multiprotein complex part of a tripartite complex with dynein and a adapter, such as BICDL1, BICD2 or HOOK3. The dynactin complex is built around ACTR1A/ACTB filament and consists of an actin-related filament composed of a shoulder domain, a pointed end and a barbed end. Its length is defined by its flexible shoulder domain. The soulder is composed of 2 DCTN1 subunits, 4 DCTN2 and 2 DCTN3. DCTN1/p150(glued) binds directly to microtubules and to cytoplasmic dynein. The 4 DCNT2 (via N-terminus) bind the ACTR1A filament and act as molecular rulers to determine the length. The pointed end is important for binding dynein-dynactin cargo adapters. Consists of 4 subunits: ACTR10, DCNT4, DCTN5 and DCTN6. The barbed end is composed of a CAPZA1:CAPZB heterodimers, which binds ACTR1A/ACTB filament and dynactin and stabilizes dynactin. Interacts with the C-terminus of MAPRE1, MAPRE2 and MAPRE3. Interacts (via C-terminus) with SNX6. Interacts with CLN3, DYNAP, ECPAS and FBXL5. Interacts with MISP; this interaction regulates its distribution at the cell cortex. Interacts with CEP131. Interacts with CEP126. Interacts with CLIP1. Interacts with dynein intermediate chain and dynein heavy chain. Interacts with PLK1 (via POLO-box domain). Interacts with TBCB. Binds preferentially to tyrosinated microtubules than to detyrosinated microtubules. Interacts with PARD6A. Interacts with HPS6. Interacts with KIF3A. Interacts with BICD2. Interacts with DST (isoform 9). Interacts with DST (isoform 1). Identified in a complex with MREG and RILP. Interacts with BCCIP (isoform 2/alpha). Interacts with DCDC1. Interacts with AKNA. Interacts with DYNC1I2. Interacts with RUFY3 and RUFY4. Post-translationally, ubiquitinated by a SCF complex containing FBXL5, leading to its degradation by the proteasome. In terms of processing, phosphorylation by SLK at Thr-145, Thr-146 and Thr-147 targets DCTN1 to the centrosome. It is uncertain if SLK phosphorylates all three threonines or one or two of them. PLK1-mediated phosphorylation at Ser-179 is essential for its localization in the nuclear envelope, promotes its dissociation from microtubules during early mitosis and positively regulates nuclear envelope breakdown during prophase. Brain.

It localises to the cytoplasm. Its subcellular location is the cytoskeleton. The protein localises to the microtubule organizing center. It is found in the centrosome. The protein resides in the centriole. It localises to the spindle. Its subcellular location is the nucleus envelope. The protein localises to the cell cortex. Functionally, part of the dynactin complex that activates the molecular motor dynein for ultra-processive transport along microtubules. Plays a key role in dynein-mediated retrograde transport of vesicles and organelles along microtubules by recruiting and tethering dynein to microtubules. Binds to both dynein and microtubules providing a link between specific cargos, microtubules and dynein. Essential for targeting dynein to microtubule plus ends, recruiting dynein to membranous cargos and enhancing dynein processivity (the ability to move along a microtubule for a long distance without falling off the track). Can also act as a brake to slow the dynein motor during motility along the microtubule. Can regulate microtubule stability by promoting microtubule formation, nucleation and polymerization and by inhibiting microtubule catastrophe in neurons. Inhibits microtubule catastrophe by binding both to microtubules and to tubulin, leading to enhanced microtubule stability along the axon. Plays a role in metaphase spindle orientation. Plays a role in centriole cohesion and subdistal appendage organization and function. Its recruitment to the centriole in a KIF3A-dependent manner is essential for the maintenance of centriole cohesion and the formation of subdistal appendage. Also required for microtubule anchoring at the mother centriole. Plays a role in primary cilia formation. This Homo sapiens (Human) protein is Dynactin subunit 1.